We begin with the raw amino-acid sequence, 917 residues long: Interleukin-6 receptor subunit beta (917 aa).

The N-terminal stretch at 1–22 is a signal peptide; it reads MSAPRIWLAQALLFFLTTESIG. Residues 23–617 are Extracellular-facing; it reads QLLEPCGYIY…TPKFAQGEIE (595 aa). An Ig-like C2-type domain is found at 26–120; the sequence is EPCGYIYPEF…IEQNVYGVTM (95 aa). Cystine bridges form between cysteine 28-cysteine 54 and cysteine 48-cysteine 103. N-linked (GlcNAc...) asparagine glycans are attached at residues asparagine 43, asparagine 61, asparagine 83, and asparagine 131. 5 Fibronectin type-III domains span residues 128-221, 222-322, 327-417, 422-515, and 517-611; these read KPTN…VKPT, PPYN…TYED, PPSF…IPSP, AYSV…LKQA, and PARG…TPKF. A disulfide bridge connects residues cysteine 134 and cysteine 144. Residue asparagine 157 is glycosylated (N-linked (GlcNAc...) asparagine). Cysteine 172 and cysteine 180 are oxidised to a cystine. Asparagine 225 carries N-linked (GlcNAc...) asparagine glycosylation. The WSXWS motif signature appears at 308–312; sequence WSDWS. An N-linked (GlcNAc...) asparagine glycan is attached at asparagine 388. Cysteine 456 and cysteine 464 are oxidised to a cystine. Asparagine 476 and asparagine 551 each carry an N-linked (GlcNAc...) asparagine glycan. Residues 618–639 form a helical membrane-spanning segment; it reads AIVVPVCLAFLLTTLLGVLFCF. Over 640–917 the chain is Cytoplasmic; that stretch reads NKRDLIKKHI…TVRQGGYMPQ (278 aa). Positions 649-657 match the Box 1 motif motif; it reads IWPNVPDPS. Disordered regions lie at residues 658-678 and 719-754; these read KSHIAQWSPHTPPRHNFNSKD and TEGHSSGIGGSSCMSSSRPSISSNEENESAQSTAST. Serine 659 and serine 665 each carry phosphoserine. Positions 729–753 are enriched in low complexity; that stretch reads SSCMSSSRPSISSNEENESAQSTAS. Residues serine 780, serine 787, serine 827, and serine 837 each carry the phosphoserine modification. The segment at 898–917 is disordered; the sequence is EEIPKSYLPQTVRQGGYMPQ.

Belongs to the type I cytokine receptor family. Type 2 subfamily. Component of a hexamer of two molecules each of IL6, IL6R and IL6ST; associates with the complex IL6:IL6R but does not interact with IL6. Forms heterodimers composed of LIFR and IL6ST (type I OSM receptor) which are activated by LIF and OSM. Also forms heterodimers composed of OSMR and IL6ST (type II receptor) which are activated by OSM but not by LIF. Interacts with HCK. Interacts with INPP5D/SHIP1. Interacts with SRC and YES. Interacts with ARMH4; this interaction prevents IL6ST protein homodimerization and bridges ARMH4 with IL6R and STAT3 and therefore inhibits phosphorylation of STAT3 at 'Tyr-705'. Phosphorylation of Ser-780 down-regulates cell surface expression. In terms of processing, heavily N-glycosylated. Glycosylation is required for protein stability and localization in plasma membrane but not for ligand binding. As to expression, expression not restricted to IL6-responsive cells. Found in tissues such as brain, heart, thymus, spleen, kidney, lung and liver. Found in all the cell lines tested except BaF-B03. Expressed paraventricular nucleus of the hypothalamus.

It localises to the cell membrane. In terms of biological role, signal-transducing molecule. The receptor systems for IL6, LIF, OSM, CNTF, IL11, CTF1 and BSF3 can utilize IL6ST for initiating signal transmission. Binding of IL6 to IL6R induces IL6ST homodimerization and formation of a high-affinity receptor complex, which activates the intracellular JAK-MAPK and JAK-STAT3 signaling pathways. That causes phosphorylation of IL6ST tyrosine residues which in turn activates STAT3. In parallel, the IL6 signaling pathway induces the expression of two cytokine receptor signaling inhibitors, SOCS1 and SOCS3, which inhibit JAK and terminate the activity of the IL6 signaling pathway as a negative feedback loop. Also activates the yes-associated protein 1 (YAP) and NOTCH pathways to control inflammation-induced epithelial regeneration, independently of STAT3. Mediates signals which regulate immune response, hematopoiesis, pain control and bone metabolism. Has a role in embryonic development. Essential for survival of motor and sensory neurons and for differentiation of astrocytes. Required for expression of TRPA1 in nociceptive neurons. Required for the maintenance of PTH1R expression in the osteoblast lineage and for the stimulation of PTH-induced osteoblast differentiation. Required for normal trabecular bone mass and cortical bone composition. In Mus musculus (Mouse), this protein is Interleukin-6 receptor subunit beta.